The chain runs to 1097 residues: MMDIYVCLKRPSWMVDNKRMRTASNFQWLLSTFILLYLMNQVNSQKKGAPHDLKCVTNNLQVWNCSWKAPSGTGRGTDYEVCIENRSRSCYQLEKTSIKIPALSHGDYEITINSLHDFGSSTSKFTLNEQNVSLIPDTPEILNLSADFSTSTLYLKWNDRGSVFPHRSNVIWEIKVLRKESMELVKLVTHNTTLNGKDTLHHWSWASDMPLECAIHFVEIRCYIDNLHFSGLEEWSDWSPVKNISWIPDSQTKVFPQDKVILVGSDITFCCVSQEKVLSALIGHTNCPLIHLDGENVAIKIRNISVSASSGTNVVFTTEDNIFGTVIFAGYPPDTPQQLNCETHDLKEIICSWNPGRVTALVGPRATSYTLVESFSGKYVRLKRAEAPTNESYQLLFQMLPNQEIYNFTLNAHNPLGRSQSTILVNITEKVYPHTPTSFKVKDINSTAVKLSWHLPGNFAKINFLCEIEIKKSNSVQEQRNVTIKGVENSSYLVALDKLNPYTLYTFRIRCSTETFWKWSKWSNKKQHLTTEASPSKGPDTWREWSSDGKNLIIYWKPLPINEANGKILSYNVSCSSDEETQSLSEIPDPQHKAEIRLDKNDYIISVVAKNSVGSSPPSKIASMEIPNDDLKIEQVVGMGKGILLTWHYDPNMTCDYVIKWCNSSRSEPCLMDWRKVPSNSTETVIESDEFRPGIRYNFFLYGCRNQGYQLLRSMIGYIEELAPIVAPNFTVEDTSADSILVKWEDIPVEELRGFLRGYLFYFGKGERDTSKMRVLESGRSDIKVKNITDISQKTLRIADLQGKTSYHLVLRAYTDGGVGPEKSMYVVTKENSVGLIIAILIPVAVAVIVGVVTSILCYRKREWIKETFYPDIPNPENCKALQFQKSVCEGSSALKTLEMNPCTPNNVEVLETRSAFPKIEDTEIISPVAERPEDRSDAEPENHVVVSYCPPIIEEEIPNPAADEAGGTAQVIYIDVQSMYQPQAKPEEEQENDPVGGAGYKPQMHLPINSTVEDIAAEEDLDKTAGYRPQANVNTWNLVSPDSPRSIDSNSEIVSFGSPCSINSRQFLIPPKDEDSPKSNGGGWSFTNFFQNKPND.

An N-terminal signal peptide occupies residues 1-44 (MMDIYVCLKRPSWMVDNKRMRTASNFQWLLSTFILLYLMNQVNS). Topologically, residues 45–833 (QKKGAPHDLK…SMYVVTKENS (789 aa)) are extracellular. Positions 49-138 (APHDLKCVTN…EQNVSLIPDT (90 aa)) constitute a Fibronectin type-III 1 domain. 2 cysteine pairs are disulfide-bonded: C55–C65 and C82–C90. N-linked (GlcNAc...) asparagine glycosylation is found at N64, N85, N131, N143, N191, N243, and N303. The cysteines at positions 213 and 270 are disulfide-linked. 5 Fibronectin type-III domains span residues 335-434 (TPQQ…VYPH), 435-534 (TPTS…TEAS), 538-629 (GPDT…IPND), 627-719 (PNDD…IGYI), and 724-833 (PIVA…KENS). An intrachain disulfide couples C341 to C351. N390, N407, N426, N445, N481, and N489 each carry an N-linked (GlcNAc...) asparagine glycan. C466 and C511 are disulfide-bonded. A WSXWS motif motif is present at residues 519-523 (WSKWS). N-linked (GlcNAc...) asparagine glycosylation is found at N572, N652, N663, N680, N729, and N787. A helical transmembrane segment spans residues 834–858 (VGLIIAILIPVAVAVIVGVVTSILC). At 859–1097 (YRKREWIKET…TNFFQNKPND (239 aa)) the chain is on the cytoplasmic side. Positions 869 to 877 (FYPDIPNPE) match the Box 1 motif motif. A Phosphoserine modification is found at S927. The tract at residues 983–1005 (PQAKPEEEQENDPVGGAGYKPQM) is disordered. Phosphoserine is present on S1044. Positions 1066–1097 (RQFLIPPKDEDSPKSNGGGWSFTNFFQNKPND) are disordered. Residues 1086-1097 (SFTNFFQNKPND) are compositionally biased toward polar residues.

This sequence belongs to the type I cytokine receptor family. Type 2 subfamily. Heterodimer composed of LIFR and IL6ST. The heterodimer formed by LIFR and IL6ST interacts with the complex formed by CNTF and CNTFR.

Its subcellular location is the cell membrane. The protein resides in the secreted. In terms of biological role, signal-transducing molecule. May have a common pathway with IL6ST. The soluble form inhibits the biological activity of LIF by blocking its binding to receptors on target cells. This is Leukemia inhibitory factor receptor (LIFR) from Homo sapiens (Human).